The following is a 603-amino-acid chain: ADP-ribosylation factor-binding protein GGA2 (603 aa).

The disordered stretch occupies residues 1 to 22 (MAATAVAAGTGSPAGTESAEGG). Residues 13–22 (PAGTESAEGG) are compositionally biased toward low complexity. A VHS domain is found at 36–166 (ATDPSMAEQD…MLKKQGIIKQ (131 aa)). Residues 190 to 317 (DEEKSKLLTR…GVRLYKQVVE (128 aa)) form the GAT domain. Residues 318 to 473 (GRVSAGNAVP…VFVPLESVKP (156 aa)) are unstructured hinge. One can recognise a GAE domain in the interval 474-595 (SSLPPIVVYD…SEVGEVKDFP (122 aa)).

The protein belongs to the GGA protein family. Monomer. Interacts with NECAP1, TSG101, UBC and AFTPH/aftiphilin. Interacts with CNST. Interacts with GGA1 and GGA3. Binds to clathrin and activated ARFs, such as ARF1, ARF5 and ARF6. Binds RABEP1 and RABGEF1. Interacts with the type-I membrane proteins LRP3, M6PR/CD-MPR, IGF2R/CI-MPR and BACE1. Interacts (via N-terminal VHS domain) with SORL1/sorLA and SORT1 (via C-terminal cytosolic domain). Binds the accessory proteins CCDC91, P200, SYNRG, EPN4 and NECAP2. Interacts with ADRA2B. Interacts (via VHS domain) with PIK4B; the interaction is important for PIK4B location at the Golgi apparatus membrane. Ubiquitinated.

The protein resides in the golgi apparatus. It is found in the trans-Golgi network membrane. It localises to the endosome membrane. The protein localises to the early endosome membrane. Plays a role in protein sorting and trafficking between the trans-Golgi network (TGN) and endosomes. Mediates the ARF-dependent recruitment of clathrin to the TGN and binds ubiquitinated proteins and membrane cargo molecules with a cytosolic acidic cluster-dileucine (DXXLL) motif. Mediates export of the GPCR receptor ADRA2B to the cell surface. Regulates retrograde transport of phosphorylated form of BACE1 from endosomes to the trans-Golgi network. The polypeptide is ADP-ribosylation factor-binding protein GGA2 (Gga2) (Mus musculus (Mouse)).